The chain runs to 1116 residues: cGMP-specific 3',5'-cyclic phosphodiesterase (1116 aa).

Disordered stretches follow at residues 1 to 36 (MTDV…NGAA) and 82 to 136 (KSEC…ATQQ). Over residues 15 to 28 (VSSTSSEVAVETTS) the composition is skewed to low complexity. Residues 86–136 (HSQSNNNQHVETAPSKQSSDSEASAPTTVSIPSANAKINSSSSGKTTATQQ) are compositionally biased toward polar residues. GAF domains follow at residues 241–393 (DIDV…GIGI) and 425–611 (NLEC…GLGI). One can recognise a PDEase domain in the interval 641–964 (SQDQTEKLAQ…RNWQDLAEKV (324 aa)). His-717 functions as the Proton donor in the catalytic mechanism. Positions 721, 757, 758, and 868 each coordinate a divalent metal cation. Disordered stretches follow at residues 1005–1031 (QHGG…LSIK) and 1067–1116 (HVSE…CALL). Basic and acidic residues-rich tracts occupy residues 1014–1023 (EDTHTPEHQR) and 1067–1076 (HVSEDMDDKS). The span at 1085–1103 (SGSVGRMSASSSTSSAGTV) shows a compositional bias: low complexity. Residues 1106–1116 (SKKRSKLCALL) are compositionally biased toward basic residues. Cys-1113 carries the post-translational modification Cysteine methyl ester. Cys-1113 carries the S-farnesyl cysteine lipid modification. The propeptide at 1114–1116 (ALL) is removed in mature form.

The protein belongs to the cyclic nucleotide phosphodiesterase family. In terms of assembly, interacts with PrBP. Requires a divalent metal cation as cofactor.

It is found in the cell membrane. It catalyses the reaction 3',5'-cyclic GMP + H2O = GMP + H(+). In terms of biological role, has a role regulating cGMP transport in Malpighian tubule principal cells. This Drosophila mojavensis (Fruit fly) protein is cGMP-specific 3',5'-cyclic phosphodiesterase.